The chain runs to 44 residues: Photosystem I reaction center subunit IX (44 aa).

A helical transmembrane segment spans residues 7–27; the sequence is YLSTAPVLATLWFSSLAGLLI.

It belongs to the PsaJ family.

It localises to the plastid. The protein localises to the chloroplast thylakoid membrane. Its function is as follows. May help in the organization of the PsaE and PsaF subunits. This is Photosystem I reaction center subunit IX from Welwitschia mirabilis (Tree tumbo).